The primary structure comprises 225 residues: Cytochrome c oxidase subunit 2 (225 aa).

Residues 1-25 (MSTWFMFMFQESNSYYADNLISFHN) are Mitochondrial intermembrane-facing. A helical transmembrane segment spans residues 26–47 (MVMMIIIMISTLTVYIILDLFM). The Mitochondrial matrix segment spans residues 48 to 62 (NKFSNLFLLKNHNIE). Residues 63–82 (IIWTIIPIIILLIICFPSLK) form a helical membrane-spanning segment. The Mitochondrial intermembrane portion of the chain corresponds to 83–225 (ILYLIDEIVN…YFLNWVNKQI (143 aa)). The Cu cation site is built by H159, C194, E196, C198, H202, and M205. E196 contributes to the Mg(2+) binding site.

It belongs to the cytochrome c oxidase subunit 2 family. In terms of assembly, component of the cytochrome c oxidase (complex IV, CIV), a multisubunit enzyme composed of a catalytic core of 3 subunits and several supernumerary subunits. The complex exists as a monomer or a dimer and forms supercomplexes (SCs) in the inner mitochondrial membrane with ubiquinol-cytochrome c oxidoreductase (cytochrome b-c1 complex, complex III, CIII). Requires Cu cation as cofactor.

Its subcellular location is the mitochondrion inner membrane. It catalyses the reaction 4 Fe(II)-[cytochrome c] + O2 + 8 H(+)(in) = 4 Fe(III)-[cytochrome c] + 2 H2O + 4 H(+)(out). Component of the cytochrome c oxidase, the last enzyme in the mitochondrial electron transport chain which drives oxidative phosphorylation. The respiratory chain contains 3 multisubunit complexes succinate dehydrogenase (complex II, CII), ubiquinol-cytochrome c oxidoreductase (cytochrome b-c1 complex, complex III, CIII) and cytochrome c oxidase (complex IV, CIV), that cooperate to transfer electrons derived from NADH and succinate to molecular oxygen, creating an electrochemical gradient over the inner membrane that drives transmembrane transport and the ATP synthase. Cytochrome c oxidase is the component of the respiratory chain that catalyzes the reduction of oxygen to water. Electrons originating from reduced cytochrome c in the intermembrane space (IMS) are transferred via the dinuclear copper A center (CU(A)) of subunit 2 and heme A of subunit 1 to the active site in subunit 1, a binuclear center (BNC) formed by heme A3 and copper B (CU(B)). The BNC reduces molecular oxygen to 2 water molecules using 4 electrons from cytochrome c in the IMS and 4 protons from the mitochondrial matrix. The polypeptide is Cytochrome c oxidase subunit 2 (COII) (Apis mellifera ligustica (Common honeybee)).